The following is a 966-amino-acid chain: MSRVASSRVLKDSNGDIGEHLRNHIHLTNCIHLKNHMHNNNKQSPVLTDRSLLMRDLVVLQRSRSLRDPSASPNLKEDHQDSREGRRRSGLRLSGSSPIVSFGTSKVTPSDEKFDRSSRKSYRVEEVNEVYSVPSVKSVSKDRINKKVNEAIVKTLSDQLNEVGGDSDDLVSCNVRPRGDGCRRRKFRGTRRAGRAVNVRDNAAGNESEMSIASNSVPRGEKYEGEEGGGGRDREQNMSCGIPFNWSRIHHRGKTFLDIAGRSLSCGISDSKGRKGEAGTPMFSDSSSSDREALPLLVDSADNEEWVHDYSGELGIFADNLLKNGKDSVIGKKSSRKNTRWHQSFTQKYAPRTFRDLLGQNLVVQALSNAIAKRRVGLLYVFHGPNGTGKTSCARVFARALNCHSTEQSKPCGVCSSCVSYDDGKNRYIREMGPVKSFDFENLLDKTNIRQQQKQQLVLIFDDCDTMSTDCWNTLSKIVDRAPRRVVFVLVCSSLDVLPHIIVSRCQKFFFPKLKDVDIIDSLQLIASKEEIDIDKDALKLVASRSDGSLRDAEMTLEQLSLLGTRISVPLVQEMVGLISDEKLVDLLDLALSADTVNTVKNLRIIMETGLEPLALMSQLATVITDILAGSYDFTKDQCKRKFFRRQPLSKEDMEKLKQALKTLSESEKQLRVSNDKLTWLTAALLQLAPDKQYLLPHSSSADASFNHTPLTDSDPSNHVVAGTRRDDSKQGFSCKNRPSVEDIWLAVIENVRVNGLREFLYKEGKIFSISIGSAPMVQLMFNSPIAKSTAENFEEHILKAFEAVLGSPVTLEMRTESKKDLGFSSLQGLSNGERFRESGRSEIVEVADSESPMTRVRRKHLEASQNQNQNQNQSIVRGKVSLAQVIKQAEGNSWSKHKAVEIANKLEQENLKLEPRSRSLICWKASRSTRRKLSRLKVRTRKLRLHSLLKLVSCGKCLSTRSPPR.

Disordered stretches follow at residues R64 to S118 and R200 to N237. Positions L75 to E84 are enriched in basic and acidic residues. Over residues P98–T108 the composition is skewed to polar residues. Over residues P109–S118 the composition is skewed to basic and acidic residues. A compositionally biased stretch (polar residues) spans S208 to V217. The span at R219–Q236 shows a compositional bias: basic and acidic residues. G384 to T391 lines the ATP pocket. The Zn(2+) site is built by C403, C412, C415, and C418. Residues S650–L678 are a coiled coil. Polar residues predominate over residues F706–S717. Positions F706–F733 are disordered.

This sequence belongs to the DnaX/STICHEL family.

The chain is Protein STICHEL-like 4 from Arabidopsis thaliana (Mouse-ear cress).